A 176-amino-acid chain; its full sequence is Shikimate kinase (176 aa).

Residue 12–17 coordinates ATP; the sequence is GSGKST. Mg(2+) is bound at residue Ser16. Substrate is bound by residues Asp34, Arg58, and Gly80. Position 117 (Arg117) interacts with ATP. Arg136 is a substrate binding site. Residue Arg153 coordinates ATP.

Belongs to the shikimate kinase family. In terms of assembly, monomer. It depends on Mg(2+) as a cofactor.

It localises to the cytoplasm. The enzyme catalyses shikimate + ATP = 3-phosphoshikimate + ADP + H(+). It functions in the pathway metabolic intermediate biosynthesis; chorismate biosynthesis; chorismate from D-erythrose 4-phosphate and phosphoenolpyruvate: step 5/7. Its function is as follows. Catalyzes the specific phosphorylation of the 3-hydroxyl group of shikimic acid using ATP as a cosubstrate. The polypeptide is Shikimate kinase (Mycobacterium avium (strain 104)).